Here is a 362-residue protein sequence, read N- to C-terminus: Cytochrome P450 monooxygenase-like protein avaN (362 aa).

The helical transmembrane segment at 3 to 23 (VILAIFIAAAGCLFSSWRIYW) threads the bilayer.

Belongs to the cytochrome P450 family.

The protein localises to the membrane. It participates in secondary metabolite biosynthesis. Its function is as follows. Cytochrome P450 monooxygenase-like protein; part of the cluster that mediates the biosynthesis of a highly modified cyclo-arginine-tryptophan dipeptide (cRW). The first step of the pathway is perfornmed by the arginine-containing cyclodipeptide synthase (RCPDS) avaA that acts as the scaffold-generating enzyme and is responsible for formation of the cyclo-Arg-Trp (cRW) diketopiperazine. AvaB then acts as a multifunctional flavoenzyme that is responsible for generating the cyclo-Arg-formylkynurenine DKP, which can be deformylated by avaC. AvaB then further catalyzes an additional N-oxidation followed by cyclization and dehydration. The next step is an N-acetylation of the guanidine group catalyzed by the arginine N-acetyltransferase avaD. The roles of the additional enzymes identified within the ava cluster still have to be determined. This is Cytochrome P450 monooxygenase-like protein avaN from Aspergillus versicolor.